Here is a 338-residue protein sequence, read N- to C-terminus: UDP-glucose 4-epimerase (338 aa).

NAD(+)-binding positions include 11 to 12 (YI), 31 to 36 (DNLCNS), 58 to 59 (DI), 80 to 84 (FAGLK), Asn-99, Ser-124, Tyr-149, Lys-153, and Phe-178. Ser-124 and Tyr-149 together coordinate substrate. Catalysis depends on Tyr-149, which acts as the Proton acceptor. Substrate is bound by residues Asn-179, 199–200 (NL), 216–218 (AIF), Arg-231, 292–295 (REGD), and Tyr-299.

The protein belongs to the NAD(P)-dependent epimerase/dehydratase family. As to quaternary structure, homodimer. It depends on NAD(+) as a cofactor.

The enzyme catalyses UDP-alpha-D-glucose = UDP-alpha-D-galactose. Its pathway is carbohydrate metabolism; galactose metabolism. Inhibited by UDP-phenol and NaBH3CN. Its function is as follows. Involved in the metabolism of galactose. Catalyzes the conversion of UDP-galactose (UDP-Gal) to UDP-glucose (UDP-Glc) through a mechanism involving the transient reduction of NAD. It is only active on UDP-galactose and UDP-glucose. The sequence is that of UDP-glucose 4-epimerase (galE) from Escherichia coli (strain K12).